A 121-amino-acid polypeptide reads, in one-letter code: NAD(P)H-quinone oxidoreductase subunit 3, chloroplastic (121 aa).

Helical transmembrane passes span Phe10–Leu30, Met65–Met85, and Leu90–Ile110.

It belongs to the complex I subunit 3 family. As to quaternary structure, NDH is composed of at least 16 different subunits, 5 of which are encoded in the nucleus.

It localises to the plastid. The protein localises to the chloroplast thylakoid membrane. The catalysed reaction is a plastoquinone + NADH + (n+1) H(+)(in) = a plastoquinol + NAD(+) + n H(+)(out). It carries out the reaction a plastoquinone + NADPH + (n+1) H(+)(in) = a plastoquinol + NADP(+) + n H(+)(out). Its function is as follows. NDH shuttles electrons from NAD(P)H:plastoquinone, via FMN and iron-sulfur (Fe-S) centers, to quinones in the photosynthetic chain and possibly in a chloroplast respiratory chain. The immediate electron acceptor for the enzyme in this species is believed to be plastoquinone. Couples the redox reaction to proton translocation, and thus conserves the redox energy in a proton gradient. The polypeptide is NAD(P)H-quinone oxidoreductase subunit 3, chloroplastic (Staurastrum punctulatum (Green alga)).